Consider the following 309-residue polypeptide: Probable cell division protein WhiA (309 aa).

The segment at residues 275–309 (SLKELGELVPGGPISKSGINHRLRKINQYAEKLRA) is a DNA-binding region (H-T-H motif).

Belongs to the WhiA family.

In terms of biological role, involved in cell division and chromosome segregation. The protein is Probable cell division protein WhiA of Pediococcus pentosaceus (strain ATCC 25745 / CCUG 21536 / LMG 10740 / 183-1w).